The primary structure comprises 365 residues: Peptide chain release factor 2 (365 aa).

An N5-methylglutamine modification is found at glutamine 252.

This sequence belongs to the prokaryotic/mitochondrial release factor family. Post-translationally, methylated by PrmC. Methylation increases the termination efficiency of RF2.

The protein localises to the cytoplasm. Its function is as follows. Peptide chain release factor 2 directs the termination of translation in response to the peptide chain termination codons UGA and UAA. The protein is Peptide chain release factor 2 of Pseudoalteromonas translucida (strain TAC 125).